The following is a 615-amino-acid chain: Probable transporter mch1 (615 aa).

A disordered region spans residues 1 to 35 (MTGSIGQAPAIDKRDFDINRRSSTPHETAAQEDEA). A compositionally biased stretch (basic and acidic residues) spans 11-20 (IDKRDFDINR). A helical membrane pass occupies residues 84-104 (FVWGVITCLGAGSITAFSLYG). The N-linked (GlcNAc...) asparagine glycan is linked to Asn112. The next 5 helical transmembrane spans lie at 120–140 (EVSI…GYLC), 147–167 (PLTL…AFVY), 182–202 (FWVM…MYLA), 218–238 (GIIL…QSQV), and 261–281 (FLFL…ALRI). N-linked (GlcNAc...) asparagine glycosylation occurs at Asn329. The next 6 membrane-spanning stretches (helical) occupy residues 371 to 391 (IFLA…VTGP), 428 to 448 (IIAL…DLFA), 477 to 497 (LAFL…LASP), 512 to 532 (LVGL…SVVW), 538 to 558 (GTNW…WGVI), and 583 to 603 (FGFW…AWLV).

It belongs to the major facilitator superfamily.

Its subcellular location is the vacuole membrane. In terms of biological role, probable transporter. This Emericella nidulans (strain FGSC A4 / ATCC 38163 / CBS 112.46 / NRRL 194 / M139) (Aspergillus nidulans) protein is Probable transporter mch1 (mch1).